Here is a 501-residue protein sequence, read N- to C-terminus: Acetylcholine receptor subunit beta (501 aa).

An N-terminal signal peptide occupies residues methionine 1 to glycine 23. The Extracellular portion of the chain corresponds to serine 24–lysine 244. An intrachain disulfide couples cysteine 151 to cysteine 165. The N-linked (GlcNAc...) asparagine glycan is linked to asparagine 164. Transmembrane regions (helical) follow at residues proline 245–leucine 269, methionine 277–alanine 295, and tyrosine 311–leucine 332. At histidine 333–arginine 469 the chain is on the cytoplasmic side. A disordered region spans residues arginine 362–glycine 382. A compositionally biased stretch (basic and acidic residues) spans proline 363–histidine 375. Tyrosine 390 carries the post-translational modification Phosphotyrosine; by Tyr-kinases. The helical transmembrane segment at leucine 470–leucine 488 threads the bilayer.

Belongs to the ligand-gated ion channel (TC 1.A.9) family. Acetylcholine receptor (TC 1.A.9.1) subfamily. Beta-1/CHRNB1 sub-subfamily. Pentamer of two alpha chains, and one each of the beta, delta, and gamma (in immature muscle) or epsilon (in mature muscle) chains. The muscle heteropentamer composed of alpha-1, beta-1, delta, epsilon subunits interacts with the alpha-conotoxin ImII.

The protein localises to the postsynaptic cell membrane. It localises to the cell membrane. It carries out the reaction K(+)(in) = K(+)(out). The catalysed reaction is Na(+)(in) = Na(+)(out). Functionally, after binding acetylcholine, the AChR responds by an extensive change in conformation that affects all subunits and leads to opening of an ion-conducting channel across the plasma membrane. The protein is Acetylcholine receptor subunit beta (Chrnb1) of Mus musculus (Mouse).